A 256-amino-acid chain; its full sequence is Ubiquinone/menaquinone biosynthesis C-methyltransferase UbiE (256 aa).

The segment covering 1–12 (MNDQRKGDHAEP) has biased composition (basic and acidic residues). Residues 1 to 22 (MNDQRKGDHAEPTTHFGYQDVP) are disordered. S-adenosyl-L-methionine contacts are provided by residues T79, D100, and 128 to 129 (DA).

The protein belongs to the class I-like SAM-binding methyltransferase superfamily. MenG/UbiE family.

The catalysed reaction is a 2-demethylmenaquinol + S-adenosyl-L-methionine = a menaquinol + S-adenosyl-L-homocysteine + H(+). It catalyses the reaction a 2-methoxy-6-(all-trans-polyprenyl)benzene-1,4-diol + S-adenosyl-L-methionine = a 5-methoxy-2-methyl-3-(all-trans-polyprenyl)benzene-1,4-diol + S-adenosyl-L-homocysteine + H(+). Its pathway is quinol/quinone metabolism; menaquinone biosynthesis; menaquinol from 1,4-dihydroxy-2-naphthoate: step 2/2. The protein operates within cofactor biosynthesis; ubiquinone biosynthesis. Functionally, methyltransferase required for the conversion of demethylmenaquinol (DMKH2) to menaquinol (MKH2) and the conversion of 2-polyprenyl-6-methoxy-1,4-benzoquinol (DDMQH2) to 2-polyprenyl-3-methyl-6-methoxy-1,4-benzoquinol (DMQH2). This Pseudomonas putida (Arthrobacter siderocapsulatus) protein is Ubiquinone/menaquinone biosynthesis C-methyltransferase UbiE.